The sequence spans 133 residues: MIPGEIIVKNTEIEVNKHHPETVIEVKNTGDRPIQVGSHFHFFEANKALEFDREKAYGKHLDIPAGAAVRFEPGDEKKVQLVEYSGRRKIYGFRGLVDGDIDEERVFRPNDSNQNAAVKNDAGEDNANKKGGK.

The segment at 106 to 133 (VFRPNDSNQNAAVKNDAGEDNANKKGGK) is disordered.

The protein belongs to the urease beta subunit family. In terms of assembly, heterotrimer of UreA (gamma), UreB (beta) and UreC (alpha) subunits. Three heterotrimers associate to form the active enzyme.

Its subcellular location is the cytoplasm. It carries out the reaction urea + 2 H2O + H(+) = hydrogencarbonate + 2 NH4(+). Its pathway is nitrogen metabolism; urea degradation; CO(2) and NH(3) from urea (urease route): step 1/1. In Staphylococcus epidermidis (strain ATCC 12228 / FDA PCI 1200), this protein is Urease subunit beta.